The sequence spans 153 residues: MEKTLVILKPCTVQRGLIGEIVTRFEKKGLRLAGMKMVWLTDEILSEHYAHLKEKPFFQRIKDAMSVCPVIVCCWEGVDAIHVVRTLAGTTNGRNAAPGTIRGDYSMSVQENIVHASDSPETAEIELKRFFKDDEIFDYELKNLLSLYANDEF.

Residues Lys9, Phe57, Arg85, Thr91, Arg102, and Asn112 each contribute to the ATP site. His115 serves as the catalytic Pros-phosphohistidine intermediate.

This sequence belongs to the NDK family. As to quaternary structure, homotetramer. The cofactor is Mg(2+).

It localises to the cytoplasm. The enzyme catalyses a 2'-deoxyribonucleoside 5'-diphosphate + ATP = a 2'-deoxyribonucleoside 5'-triphosphate + ADP. It catalyses the reaction a ribonucleoside 5'-diphosphate + ATP = a ribonucleoside 5'-triphosphate + ADP. Functionally, major role in the synthesis of nucleoside triphosphates other than ATP. The ATP gamma phosphate is transferred to the NDP beta phosphate via a ping-pong mechanism, using a phosphorylated active-site intermediate. This chain is Nucleoside diphosphate kinase, found in Parabacteroides distasonis (strain ATCC 8503 / DSM 20701 / CIP 104284 / JCM 5825 / NCTC 11152).